Here is a 205-residue protein sequence, read N- to C-terminus: MRQKLDRLLEQAQINLTDQQKEQLVGFVRLLDKWNKAYNLTSVRNPDEMLVKHILDSLVVSEHLQGNNFIDVGTGPGLPGIPLAIANPDKQFVLLDSLGKRITFIKNALRELGITNVTPVLSRVEEYKEQTFDGVLSRAFASLNDMVDWCYHLPNPQGKFYALKGIYAESEVQEIKNPIWLEKVIPLSVPELVGERHLVLLNKPN.

S-adenosyl-L-methionine-binding positions include Gly-73, Leu-78, 124 to 125, and Arg-138; that span reads VE.

Belongs to the methyltransferase superfamily. RNA methyltransferase RsmG family.

Its subcellular location is the cytoplasm. It carries out the reaction guanosine(527) in 16S rRNA + S-adenosyl-L-methionine = N(7)-methylguanosine(527) in 16S rRNA + S-adenosyl-L-homocysteine. Functionally, specifically methylates the N7 position of guanine in position 527 of 16S rRNA. The polypeptide is Ribosomal RNA small subunit methyltransferase G (Actinobacillus pleuropneumoniae serotype 7 (strain AP76)).